We begin with the raw amino-acid sequence, 210 residues long: MKKEIASHLLEIGAVFLQPNDPFTWSSGMKSPIYCDNRLTLSYPKVRQAIAAGLEELIKEHFPTVEVIAGTATAGIAHAAWVSDRMDLPMCYVRSKAKGHGKGNQIEGKAEKGQKVVVVEDLISTGGSAITCVEALREAGCEVLGIVSIFTYELEAGKEKLEAANVASYSLSDYSALTEVAAEKGMIGQAETKKLQEWRKDPANEAWITA.

5-phospho-alpha-D-ribose 1-diphosphate contacts are provided by residues R94, K98, H100, and 120 to 128 (EDLISTGGS). S124 serves as a coordination point for orotate.

It belongs to the purine/pyrimidine phosphoribosyltransferase family. PyrE subfamily. Homodimer. Mg(2+) serves as cofactor.

The catalysed reaction is orotidine 5'-phosphate + diphosphate = orotate + 5-phospho-alpha-D-ribose 1-diphosphate. It functions in the pathway pyrimidine metabolism; UMP biosynthesis via de novo pathway; UMP from orotate: step 1/2. Functionally, catalyzes the transfer of a ribosyl phosphate group from 5-phosphoribose 1-diphosphate to orotate, leading to the formation of orotidine monophosphate (OMP). The polypeptide is Orotate phosphoribosyltransferase (Bacillus cereus (strain ATCC 10987 / NRS 248)).